The chain runs to 685 residues: Phenoloxidase subunit 1 (685 aa).

The propeptide occupies 1–51; the sequence is MSDAKNNLLLFFDRPSEPCFMQKGEENAVFEIPDNYYPEKYQRVSNAIGNR. The N-linked (GlcNAc...) asparagine glycan is linked to asparagine 184. Histidine 209, histidine 213, and histidine 239 together coordinate Cu cation. N-linked (GlcNAc...) asparagine glycosylation is found at asparagine 254 and asparagine 324. The active-site Proton acceptor is glutamate 351. Cu cation is bound by residues histidine 366, histidine 370, and histidine 406. N-linked (GlcNAc...) asparagine glycosylation is found at asparagine 491 and asparagine 540. Disulfide bonds link cysteine 581–cysteine 623 and cysteine 583–cysteine 630.

As to quaternary structure, heterodimer. Cu(2+) serves as cofactor. The N-terminus is blocked. In terms of tissue distribution, synthesized by hemocytes and released into the hemolymph plasma.

It localises to the secreted. The enzyme catalyses 2 L-dopa + O2 = 2 L-dopaquinone + 2 H2O. The catalysed reaction is L-tyrosine + O2 = L-dopaquinone + H2O. In terms of biological role, this is a copper-containing oxidase that functions in the formation of pigments such as melanins and other polyphenolic compounds. Catalyzes the rate-limiting conversions of tyrosine to DOPA, DOPA to DOPA-quinone and possibly 5,6 dihydroxyindole to indole-5'6 quinone. This Bombyx mori (Silk moth) protein is Phenoloxidase subunit 1.